The chain runs to 755 residues: 1,4-alpha-glucan branching enzyme GlgB (755 aa).

The Nucleophile role is filled by Asp-431. Catalysis depends on Glu-484, which acts as the Proton donor.

Belongs to the glycosyl hydrolase 13 family. GlgB subfamily. In terms of assembly, monomer.

It catalyses the reaction Transfers a segment of a (1-&gt;4)-alpha-D-glucan chain to a primary hydroxy group in a similar glucan chain.. It functions in the pathway glycan biosynthesis; glycogen biosynthesis. In terms of biological role, catalyzes the formation of the alpha-1,6-glucosidic linkages in glycogen by scission of a 1,4-alpha-linked oligosaccharide from growing alpha-1,4-glucan chains and the subsequent attachment of the oligosaccharide to the alpha-1,6 position. The polypeptide is 1,4-alpha-glucan branching enzyme GlgB (Prochlorococcus marinus (strain NATL1A)).